The following is a 205-amino-acid chain: Urease accessory protein UreG (205 aa).

12-19 serves as a coordination point for GTP; that stretch reads GPVGSGKT.

It belongs to the SIMIBI class G3E GTPase family. UreG subfamily. Homodimer. UreD, UreF and UreG form a complex that acts as a GTP-hydrolysis-dependent molecular chaperone, activating the urease apoprotein by helping to assemble the nickel containing metallocenter of UreC. The UreE protein probably delivers the nickel.

Its subcellular location is the cytoplasm. Functionally, facilitates the functional incorporation of the urease nickel metallocenter. This process requires GTP hydrolysis, probably effectuated by UreG. The polypeptide is Urease accessory protein UreG (Pseudomonas savastanoi pv. phaseolicola (strain 1448A / Race 6) (Pseudomonas syringae pv. phaseolicola (strain 1448A / Race 6))).